The sequence spans 333 residues: Torsin-1A (333 aa).

The N-terminal stretch at 1–20 is a signal peptide; it reads MKLGRAALALLLLAPCVVRA. The segment at 92–252 is interaction with SNAPIN; that stretch reads KPKKPLTLSL…VSVFNNKNSG (161 aa). Position 103-110 (103-110) interacts with ATP; sequence GWTGTGKN. 2 N-linked (GlcNAc...) asparagine glycosylation sites follow: Asn144 and Asn159. Residues 252-333 form an interaction with KLC1 region; that stretch reads GFWHSSLIDR…FTKLDYYLDD (82 aa). The interaction with SYNE3 stretch occupies residues 313–333; that stretch reads KVFSDKGCKTVFTKLDYYLDD.

This sequence belongs to the ClpA/ClpB family. Torsin subfamily. In terms of assembly, homohexamer. Interacts with TOR1B; the interaction may be specific of neural tissues. Interacts (ATP-bound) with TOR1AIP1 and TOR1AIP2; the interactions induce ATPase activity. Interacts with KLHL14; preferentially when ATP-free. Interacts with KLC1 (via TPR repeats); the interaction associates TOR1A with the kinesin oligomeric complex. Interacts with COPS4; the interaction associates TOR1A with the CSN complex. Interacts with SNAPIN; the interaction is direct and associates SNAPIN with the CSN complex. Interacts with STON2. Interacts (ATP-bound) with SYNE3 (via KASH domain); the interaction is required for SYNE3 nuclear envelope localization. Interacts with VIM; the interaction associates TOR1A with the cytoskeleton. Interacts with PLEC. Interacts (ATP-bound) with SLC6A3; regulates SLC6A3 transport to the plasma membrane. N-glycosylated. As to expression, widely expressed (at protein level).

The protein resides in the endoplasmic reticulum lumen. It is found in the nucleus membrane. Its subcellular location is the cell projection. The protein localises to the growth cone. It localises to the cytoplasmic vesicle membrane. The protein resides in the synapse. It is found in the synaptosome. Its subcellular location is the cytoplasm. The protein localises to the cytoskeleton. It localises to the cytoplasmic vesicle. The protein resides in the secretory vesicle. It is found in the synaptic vesicle. The enzyme catalyses ATP + H2O = ADP + phosphate + H(+). Its function is as follows. Protein with chaperone functions important for the control of protein folding, processing, stability and localization as well as for the reduction of misfolded protein aggregates. Involved in the regulation of synaptic vesicle recycling, controls STON2 protein stability in collaboration with the COP9 signalosome complex (CSN). In the nucleus, may link the cytoskeleton with the nuclear envelope, this mechanism seems to be crucial for the control of nuclear polarity, cell movement and, specifically in neurons, nuclear envelope integrity. Participates in the cellular trafficking and may regulate the subcellular location of multipass membrane proteins such as the dopamine transporter SLC6A3, leading to the modulation of dopamine neurotransmission. In the endoplasmic reticulum, plays a role in the quality control of protein folding by increasing clearance of misfolded proteins such as SGCE variants or holding them in an intermediate state for proper refolding. May have a redundant function with TOR1B in non-neural tissues. The sequence is that of Torsin-1A (Tor1a) from Mus musculus (Mouse).